The following is a 416-amino-acid chain: S-adenosylmethionine synthase (416 aa).

H16 provides a ligand contact to ATP. D18 provides a ligand contact to Mg(2+). E44 serves as a coordination point for K(+). Residues E57 and Q100 each contribute to the L-methionine site. Residues 100 to 110 are flexible loop; the sequence is QSPDIAQGVTQ. ATP is bound by residues 175–177, 251–252, D260, 266–267, A283, and K287; these read DGK, KF, and RK. L-methionine is bound at residue D260. K291 is an L-methionine binding site.

Belongs to the AdoMet synthase family. In terms of assembly, homotetramer; dimer of dimers. It depends on Mg(2+) as a cofactor. The cofactor is K(+).

The protein localises to the cytoplasm. The enzyme catalyses L-methionine + ATP + H2O = S-adenosyl-L-methionine + phosphate + diphosphate. It participates in amino-acid biosynthesis; S-adenosyl-L-methionine biosynthesis; S-adenosyl-L-methionine from L-methionine: step 1/1. Functionally, catalyzes the formation of S-adenosylmethionine (AdoMet) from methionine and ATP. The overall synthetic reaction is composed of two sequential steps, AdoMet formation and the subsequent tripolyphosphate hydrolysis which occurs prior to release of AdoMet from the enzyme. The polypeptide is S-adenosylmethionine synthase (Crocosphaera subtropica (strain ATCC 51142 / BH68) (Cyanothece sp. (strain ATCC 51142))).